The chain runs to 117 residues: Ribosome-binding factor A (117 aa).

Belongs to the RbfA family. In terms of assembly, monomer. Binds 30S ribosomal subunits, but not 50S ribosomal subunits or 70S ribosomes.

Its subcellular location is the cytoplasm. Functionally, one of several proteins that assist in the late maturation steps of the functional core of the 30S ribosomal subunit. Associates with free 30S ribosomal subunits (but not with 30S subunits that are part of 70S ribosomes or polysomes). Required for efficient processing of 16S rRNA. May interact with the 5'-terminal helix region of 16S rRNA. This chain is Ribosome-binding factor A, found in Leptospira interrogans serogroup Icterohaemorrhagiae serovar copenhageni (strain Fiocruz L1-130).